A 309-amino-acid chain; its full sequence is MSTQPSHRLYILDTDLSTNVSTRHGRIISCRPDGSDLRTVVDGIKNLPDGIVVDHDRGLMYWTSMGTSLSAEGGSIERAKLDGSDHKTIIASGTVGVFTPKQITLARRSGKLYWCDREGMKVMRANTDGSGVEVLWSTGNAAEEDDRRDQMRWCVGVGVDEERGFVYWTQKGPSKGGKGRVFRGPLSQSPFSPDDVEVLIDGLPEPIDLEVDEQSGTLYWTDRGDPPTGNSLNCVSIADVEGVMNGTARGQVRTLARRLHETIGLALDKSGGVCYVTDLAGGVYAVDIKSGQKTVIFSELGDTTGIALV.

Belongs to the LDLR family.

It is found in the endoplasmic reticulum. The protein resides in the golgi apparatus. Its subcellular location is the endosome. Involved in endocytosis, fatty acid beta-oxidation and infectious growth. Plays a critical role in the accumulation of MSN2 from the cytosol to the nucleus by activating the cyclic AMP signaling pathway. MSN2 can then target the dienoyl-coenzyme A isomerase DCI1 and other genes involved in fatty acid beta-oxidation, which is important for lipid droplets degradation and infectious growth. The chain is Low-density lipoprotein receptor-related protein 1 from Pyricularia oryzae (strain 70-15 / ATCC MYA-4617 / FGSC 8958) (Rice blast fungus).